Here is a 405-residue protein sequence, read N- to C-terminus: Probable tRNA sulfurtransferase (405 aa).

Residues 60–165 (QEVSASLKKI…PDAAYISHEE (106 aa)) form the THUMP domain. ATP is bound by residues 183–184 (ML), 208–209 (HF), Arg265, Gly287, and Gln296.

This sequence belongs to the ThiI family.

It is found in the cytoplasm. It carries out the reaction [ThiI sulfur-carrier protein]-S-sulfanyl-L-cysteine + a uridine in tRNA + 2 reduced [2Fe-2S]-[ferredoxin] + ATP + H(+) = [ThiI sulfur-carrier protein]-L-cysteine + a 4-thiouridine in tRNA + 2 oxidized [2Fe-2S]-[ferredoxin] + AMP + diphosphate. It catalyses the reaction [ThiS sulfur-carrier protein]-C-terminal Gly-Gly-AMP + S-sulfanyl-L-cysteinyl-[cysteine desulfurase] + AH2 = [ThiS sulfur-carrier protein]-C-terminal-Gly-aminoethanethioate + L-cysteinyl-[cysteine desulfurase] + A + AMP + 2 H(+). Its pathway is cofactor biosynthesis; thiamine diphosphate biosynthesis. Functionally, catalyzes the ATP-dependent transfer of a sulfur to tRNA to produce 4-thiouridine in position 8 of tRNAs, which functions as a near-UV photosensor. Also catalyzes the transfer of sulfur to the sulfur carrier protein ThiS, forming ThiS-thiocarboxylate. This is a step in the synthesis of thiazole, in the thiamine biosynthesis pathway. The sulfur is donated as persulfide by IscS. The chain is Probable tRNA sulfurtransferase from Streptococcus suis (strain 98HAH33).